The primary structure comprises 479 residues: BRAP2 RING ZnF UBP domain-containing protein 2 (479 aa).

An RING-type; atypical zinc finger spans residues 167-207 (CPVCLERLDQDTGGILTTMCNHSFHCSCISNWPDSSCPVCR). The UBP-type; degenerate zinc-finger motif lies at 201–294 (SSCPVCRYCQ…GKLVELNSHG (94 aa)). Residues Cys218, Cys221, Cys230, Cys233, Cys238, His245, His249, and His255 each contribute to the Zn(2+) site. Positions 328–442 (NELLQAQLEN…MAQMDGESEV (115 aa)) form a coiled coil. Positions 434-479 (AQMDGESEVSETKEVQDATVSTTNTSSSGAGNVIHANKKKSNRRKG) are disordered. The segment covering 451 to 466 (ATVSTTNTSSSGAGNV) has biased composition (low complexity). The span at 469–479 (ANKKKSNRRKG) shows a compositional bias: basic residues.

Component of the heteromeric E3 ligase complex made of BRIZ1 and BRIZ2. Forms heterooligomers with BRIZ1 via coiled-coil domains.

The enzyme catalyses S-ubiquitinyl-[E2 ubiquitin-conjugating enzyme]-L-cysteine + [acceptor protein]-L-lysine = [E2 ubiquitin-conjugating enzyme]-L-cysteine + N(6)-ubiquitinyl-[acceptor protein]-L-lysine.. The protein operates within protein modification; protein ubiquitination. RING-type ubiquitin E3 ligase that binds ubiquitin and is required for seed germination and post-germination growth. The polypeptide is BRAP2 RING ZnF UBP domain-containing protein 2 (Arabidopsis thaliana (Mouse-ear cress)).